Here is a 259-residue protein sequence, read N- to C-terminus: MSGVCLLIDAGNSRIKWALADTGRHFVTSGAFEHADDTPDWSTLPAPRGAWISNVAGDAAAARIDALIDAHWPALPRTVVRACAAQCGVTNGYAEPARLGSDRWAGLIGAHAAFPGEHLLIATFGTATTLEALRADGRFTGGLIAPGWALMMRSLGMHTAQLPTVSIDAATSLLDELAANDAHAPFAIDTPHALSAGCLQAQAGLIERAWRDLEKAWKAPVRLVLSGGAADAIVRALTVPHTRHDTLVLTGLALIAHSA.

An ATP-binding site is contributed by 9-16 (DAGNSRIK). Substrate-binding positions include Tyr93 and 100 to 103 (GSDR). The active-site Proton acceptor is the Asp102. Position 126 (Thr126) interacts with ATP. Thr190 provides a ligand contact to substrate.

This sequence belongs to the type III pantothenate kinase family. Homodimer. It depends on NH4(+) as a cofactor. K(+) serves as cofactor.

The protein localises to the cytoplasm. It carries out the reaction (R)-pantothenate + ATP = (R)-4'-phosphopantothenate + ADP + H(+). Its pathway is cofactor biosynthesis; coenzyme A biosynthesis; CoA from (R)-pantothenate: step 1/5. Its function is as follows. Catalyzes the phosphorylation of pantothenate (Pan), the first step in CoA biosynthesis. The polypeptide is Type III pantothenate kinase (Burkholderia thailandensis (strain ATCC 700388 / DSM 13276 / CCUG 48851 / CIP 106301 / E264)).